The chain runs to 730 residues: ATP-dependent DNA helicase Hel308 (730 aa).

Residues Gln-28 and Ile-46–Thr-53 each bind ATP. Positions Glu-33–Glu-199 constitute a Helicase ATP-binding domain. The DEAH box motif lies at Asp-144–His-147. The Helicase C-terminal domain maps to Ala-232 to Ile-433.

Belongs to the helicase family. Hel308 subfamily. Monomer.

It carries out the reaction Couples ATP hydrolysis with the unwinding of duplex DNA by translocating in the 3'-5' direction.. It catalyses the reaction ATP + H2O = ADP + phosphate + H(+). DNA-dependent ATPase and 3'-5' DNA helicase that may be involved in repair of stalled replication forks. The chain is ATP-dependent DNA helicase Hel308 from Methanosarcina mazei (strain ATCC BAA-159 / DSM 3647 / Goe1 / Go1 / JCM 11833 / OCM 88) (Methanosarcina frisia).